The sequence spans 200 residues: MVIRRLYKFCASHVVRNCSSLKCAQNIHGHNYEVEVFIETNRLDNANMALDFGLMQQEMQTFIDSFDHAHHFWDKESPEFQRFIENHCVRYVKCSFNLSAESYALMFLYYLTKILQKSVFSNNEGELKVSSVRVHETKNGYAESFLKDLENPHFKSLVHDHCVSFSQGIQSLWHDKDFFHKIISDEKQCFFHAKPLHQIP.

Histidine 13 lines the Zn(2+) pocket. Cysteine 23 acts as the Proton acceptor in catalysis. Zn(2+)-binding residues include histidine 28 and histidine 30. Active-site charge relay system residues include histidine 68 and glutamate 136.

It belongs to the PTPS family. QueD subfamily. The cofactor is Zn(2+).

It catalyses the reaction 7,8-dihydroneopterin 3'-triphosphate + H2O = 6-carboxy-5,6,7,8-tetrahydropterin + triphosphate + acetaldehyde + 2 H(+). Its pathway is purine metabolism; 7-cyano-7-deazaguanine biosynthesis. In terms of biological role, catalyzes the conversion of 7,8-dihydroneopterin triphosphate (H2NTP) to 6-carboxy-5,6,7,8-tetrahydropterin (CPH4) and acetaldehyde. The polypeptide is 6-carboxy-5,6,7,8-tetrahydropterin synthase (queD) (Helicobacter pylori (strain J99 / ATCC 700824) (Campylobacter pylori J99)).